The sequence spans 316 residues: Acetyl-coenzyme A carboxylase carboxyl transferase subunit alpha (316 aa).

The CoA carboxyltransferase C-terminal domain occupies 39–293; that stretch reads RLQDKSESLT…REQLNSQLHM (255 aa).

The protein belongs to the AccA family. In terms of assembly, acetyl-CoA carboxylase is a heterohexamer composed of biotin carboxyl carrier protein (AccB), biotin carboxylase (AccC) and two subunits each of ACCase subunit alpha (AccA) and ACCase subunit beta (AccD).

Its subcellular location is the cytoplasm. The enzyme catalyses N(6)-carboxybiotinyl-L-lysyl-[protein] + acetyl-CoA = N(6)-biotinyl-L-lysyl-[protein] + malonyl-CoA. It functions in the pathway lipid metabolism; malonyl-CoA biosynthesis; malonyl-CoA from acetyl-CoA: step 1/1. In terms of biological role, component of the acetyl coenzyme A carboxylase (ACC) complex. First, biotin carboxylase catalyzes the carboxylation of biotin on its carrier protein (BCCP) and then the CO(2) group is transferred by the carboxyltransferase to acetyl-CoA to form malonyl-CoA. This Stutzerimonas stutzeri (strain A1501) (Pseudomonas stutzeri) protein is Acetyl-coenzyme A carboxylase carboxyl transferase subunit alpha.